The following is a 475-amino-acid chain: NADP-dependent glyceraldehyde-3-phosphate dehydrogenase (475 aa).

R103 is a binding site for substrate. S151 provides a ligand contact to NADP(+). 154-155 lines the substrate pocket; it reads NY. NADP(+) contacts are provided by residues K177, T180, D215, and 230–251; that span reads GSTG…MLEL. Active-site residues include E250 and C284. Position 283–285 (283–285) interacts with substrate; that stretch reads RCT. E377 is a binding site for NADP(+). R437 is a substrate binding site.

It belongs to the aldehyde dehydrogenase family. Homotetramer.

It catalyses the reaction D-glyceraldehyde 3-phosphate + NADP(+) + H2O = (2R)-3-phosphoglycerate + NADPH + 2 H(+). The sequence is that of NADP-dependent glyceraldehyde-3-phosphate dehydrogenase (gapN) from Streptococcus mutans serotype c (strain ATCC 700610 / UA159).